A 90-amino-acid chain; its full sequence is Probable Fe(2+)-trafficking protein (90 aa).

Belongs to the Fe(2+)-trafficking protein family.

Functionally, could be a mediator in iron transactions between iron acquisition and iron-requiring processes, such as synthesis and/or repair of Fe-S clusters in biosynthetic enzymes. In Leptothrix cholodnii (strain ATCC 51168 / LMG 8142 / SP-6) (Leptothrix discophora (strain SP-6)), this protein is Probable Fe(2+)-trafficking protein.